The sequence spans 651 residues: MQTRYDVIVVGAGHAGCEAAHAAARLGCRTLLLTIDLDKLAHMSCNPSIGGPAKGHLVREIDALGGLMGRITDRSAIQIRLLNESKGPAVQSLRAQCDKRLYARLMKETLERVPNLDLRQAMVERIAPPNADTQCFTVTTHTGWRYLAPAVILTTGTFLRGRAITGEAMWGAGRAGEAPAMALSEDLAALGFPLVRLKTGTPPRLAAATIDFSLTELQPGSDTPLSFGHYYPELGETIPPPEYHGPPAPVYPHPQLDGWRPQLPCYQVHTTPEFHAIIRENLHRAPLFSGIIEGVGPRYCPSIEDKIVRFADKERHGLFLEPEGWTTSEVYVQGCNTSLPEDVQWAMLRSIPALRNVELMRIGYAIEYDAVATGEITADMQTRRLRGLFFAGQINGTTGYEEAAAQGLMAGINAAHYVQGKPPVILGRAEAYIGVLIDDLTTKEIREPYRMFTSRAEYRLLLRGDNADLRLTPLAYRLGLVDGERAAVVEARRQQTEHALQQMRERRIFPSAAVNASLEAHGIKPISQPVTVAEVLARPEVRYTQLRDALPDLPALSDAVIEQVEIGCKYSGYIARQEREVARMQKMEHRRIPPDFDYTSLPGLRNEARQVLMRFRPATLGQAGRLAGINPADVAIILFALERRQGDQVAR.

11–16 (GAGHAG) serves as a coordination point for FAD. Residue 296–310 (GPRYCPSIEDKIVRF) coordinates NAD(+).

The protein belongs to the MnmG family. As to quaternary structure, homodimer. Heterotetramer of two MnmE and two MnmG subunits. The cofactor is FAD.

The protein resides in the cytoplasm. NAD-binding protein involved in the addition of a carboxymethylaminomethyl (cmnm) group at the wobble position (U34) of certain tRNAs, forming tRNA-cmnm(5)s(2)U34. The chain is tRNA uridine 5-carboxymethylaminomethyl modification enzyme MnmG from Chloroflexus aurantiacus (strain ATCC 29366 / DSM 635 / J-10-fl).